We begin with the raw amino-acid sequence, 151 residues long: Small ribosomal subunit protein uS15 (151 aa).

This sequence belongs to the universal ribosomal protein uS15 family. In terms of assembly, component of the small ribosomal subunit. Part of the small subunit (SSU) processome, composed of more than 70 proteins and the RNA chaperone small nucleolar RNA (snoRNA) U3.

It localises to the cytoplasm. Its subcellular location is the nucleus. It is found in the nucleolus. In terms of biological role, component of the small ribosomal subunit. The ribosome is a large ribonucleoprotein complex responsible for the synthesis of proteins in the cell. Part of the small subunit (SSU) processome, first precursor of the small eukaryotic ribosomal subunit. During the assembly of the SSU processome in the nucleolus, many ribosome biogenesis factors, an RNA chaperone and ribosomal proteins associate with the nascent pre-rRNA and work in concert to generate RNA folding, modifications, rearrangements and cleavage as well as targeted degradation of pre-ribosomal RNA by the RNA exosome. The protein is Small ribosomal subunit protein uS15 (rps-13) of Caenorhabditis elegans.